Consider the following 132-residue polypeptide: MHGILSPGAWAFIAYVLGAVALCLVMLGLGRVLGGRSHGRAKNLPFESGVDSTGSARLRFPVKYALVAMLFVIFGIEMPFLYLWAVSVRENGWAGFVEVALFVSLLLAGLFYLHRVGALDWSPERRRRKPRD.

3 helical membrane-spanning segments follow: residues 9–29 (AWAF…MLGL), 66–86 (LVAM…LWAV), and 93–113 (WAGF…LFYL).

This sequence belongs to the complex I subunit 3 family. As to quaternary structure, NDH-1 is composed of 13 different subunits. Subunits NuoA, H, J, K, L, M, N constitute the membrane sector of the complex.

The protein resides in the cell inner membrane. The catalysed reaction is a quinone + NADH + 5 H(+)(in) = a quinol + NAD(+) + 4 H(+)(out). Functionally, NDH-1 shuttles electrons from NADH, via FMN and iron-sulfur (Fe-S) centers, to quinones in the respiratory chain. The immediate electron acceptor for the enzyme in this species is believed to be ubiquinone. Couples the redox reaction to proton translocation (for every two electrons transferred, four hydrogen ions are translocated across the cytoplasmic membrane), and thus conserves the redox energy in a proton gradient. This chain is NADH-quinone oxidoreductase subunit A 2, found in Pseudomonas paraeruginosa (strain DSM 24068 / PA7) (Pseudomonas aeruginosa (strain PA7)).